Here is a 344-residue protein sequence, read N- to C-terminus: AI-2 transport protein TqsA (344 aa).

Residues 1 to 4 (MAKP) lie on the Cytoplasmic side of the membrane. The chain crosses the membrane as a helical span at residues 5-25 (IITLNGLKIVIMLGMLVIILC). The Periplasmic portion of the chain corresponds to 26 to 30 (GIRFA). The chain crosses the membrane as a helical span at residues 31–51 (AEIIVPFILALFIAVILNPLV). The Cytoplasmic segment spans residues 52–61 (QHMVRWRVPR). The helical transmembrane segment at 62 to 82 (VLAVSILMTIIVMAMVLLLAY) threads the bilayer. Residues 83–149 (LGSALNELTR…LLTQLSNAMS (67 aa)) are Periplasmic-facing. Residues 150 to 170 (SIFLLLLTVLFMLLEVPQLPG) form a helical membrane-spanning segment. At 171 to 196 (KFQQMMARPVEGMAAIQRAIDSVSHY) the chain is on the cytoplasmic side. The helical transmembrane segment at 197-217 (LVLKTAISIITGLVAWAMLAA) threads the bilayer. The Periplasmic portion of the chain corresponds to 218–221 (LDVR). The helical transmembrane segment at 222–242 (FAFVWGLLAFALNYIPNIGSV) threads the bilayer. Residues 243–257 (LAAIPPIAQVLVFNG) lie on the Cytoplasmic side of the membrane. The chain crosses the membrane as a helical span at residues 258–278 (FYEALLVLAGYLLINLVFGNI). At 279-292 (LEPRIMGRGLGLST) the chain is on the periplasmic side. A helical transmembrane segment spans residues 293-313 (LVVFLSLIFWGWLLGPVGMLL). Residues 314 to 344 (SVPLTIIVKIALEQTAGGQSIAVLLSDLNKE) lie on the Cytoplasmic side of the membrane.

It belongs to the autoinducer-2 exporter (AI-2E) (TC 2.A.86) family.

It is found in the cell inner membrane. It catalyses the reaction (2R,4S)-2-methyltetrahydrofuran-2,3,3,4-tetrol(in) = (2R,4S)-2-methyltetrahydrofuran-2,3,3,4-tetrol(out). In terms of biological role, involved in the transport of the quorum-sensing signal autoinducer 2 (AI-2). Controls the transport of AI-2 either by enhancing its secretion or inhibiting its uptake and consequently represses biofilm formation and motility and affects the global gene expression in biofilms. The sequence is that of AI-2 transport protein TqsA from Escherichia coli (strain K12).